The primary structure comprises 319 residues: Probable murein peptide carboxypeptidase (319 aa).

Serine 116 serves as the catalytic Nucleophile. Active-site charge relay system residues include glutamate 214 and histidine 284.

It belongs to the peptidase S66 family.

It is found in the cytoplasm. It functions in the pathway cell wall degradation; peptidoglycan degradation. May be involved in the degradation of peptidoglycan by catalyzing the cleavage of the terminal D-alanine residue from cytoplasmic murein peptides. In Bacillus subtilis (strain 168), this protein is Probable murein peptide carboxypeptidase (ykfA).